The sequence spans 202 residues: Small ribosomal subunit protein uS4 (202 aa).

The disordered stretch occupies residues 16-43; the sequence is GELPGLSRKTPRRAYPPGQHGQGRRKRS. The 63-residue stretch at 90–152 folds into the S4 RNA-binding domain; it reads MRLDNTVFRL…DNSRRMVETN (63 aa).

It belongs to the universal ribosomal protein uS4 family. As to quaternary structure, part of the 30S ribosomal subunit. Contacts protein S5. The interaction surface between S4 and S5 is involved in control of translational fidelity.

One of the primary rRNA binding proteins, it binds directly to 16S rRNA where it nucleates assembly of the body of the 30S subunit. Functionally, with S5 and S12 plays an important role in translational accuracy. The chain is Small ribosomal subunit protein uS4 from Crocosphaera subtropica (strain ATCC 51142 / BH68) (Cyanothece sp. (strain ATCC 51142)).